The sequence spans 562 residues: Oxygen-dependent choline dehydrogenase (562 aa).

D4–E33 is an FAD binding site. H473 functions as the Proton acceptor in the catalytic mechanism.

This sequence belongs to the GMC oxidoreductase family. It depends on FAD as a cofactor.

The catalysed reaction is choline + A = betaine aldehyde + AH2. It catalyses the reaction betaine aldehyde + NAD(+) + H2O = glycine betaine + NADH + 2 H(+). It functions in the pathway amine and polyamine biosynthesis; betaine biosynthesis via choline pathway; betaine aldehyde from choline (cytochrome c reductase route): step 1/1. In terms of biological role, involved in the biosynthesis of the osmoprotectant glycine betaine. Catalyzes the oxidation of choline to betaine aldehyde and betaine aldehyde to glycine betaine at the same rate. The sequence is that of Oxygen-dependent choline dehydrogenase from Escherichia coli O45:K1 (strain S88 / ExPEC).